Here is a 635-residue protein sequence, read N- to C-terminus: BTB/POZ domain and ankyrin repeat-containing protein NPR2 (635 aa).

Residues 97–191 (SDADVDVADG…LYTGKLRPAP (95 aa)) enclose the BTB domain. Gly residues predominate over residues 138–152 (AAGGGGGGGGGGGER). The segment at 138–157 (AAGGGGGGGGGGGERTGGRP) is disordered. A C2HC NPR-type zinc finger spans residues 194-208 (VVSCADPMCPHDSCP). Zn(2+)-binding residues include cysteine 197, cysteine 202, histidine 204, and cysteine 207. ANK repeat units follow at residues 317 to 347 (KRVRRIHRALDSDDVELVKLLLNESEITLDD), 349 to 376 (NALHYAAAYCDSKVVSELLDLRLANLNL), and 380 to 409 (RGYTALHLAAMRREPAIIMCLLNKGAAVSQ). The segment at 439–576 (ESNKDRLCID…FLEDDLPDSP (138 aa)) is salicylic acid-binding core (SBC). Arginine 484 lines the salicylate pocket.

This sequence belongs to the plant 'ANKYRIN-BTB/POZ' family. 'NPR1-like' subfamily. Interacts with NRR. Interacts with TGAL1 and TGAL11.

The protein resides in the nucleus. Its pathway is protein modification; protein ubiquitination. Its function is as follows. Salicylic acid (SA)-binding substrate-specific adapter of an E3 ubiquitin-protein ligase complex (CUL3-RBX1-BTB) which mediates the ubiquitination and subsequent proteasomal degradation of target proteins. May be involved in regulating basal defense responses against pathogens, and may be involved in crosstalk between SA- and JA-dependent signaling pathways. Does not seem to be involved in defense response against the bacterial blight disease caused by Xanthomonas oryzae pv. oryzae (Xoo). Over-expression of NPR2/NH2 does not confer disease resistance to Xoo. This chain is BTB/POZ domain and ankyrin repeat-containing protein NPR2, found in Oryza sativa subsp. japonica (Rice).